Here is a 592-residue protein sequence, read N- to C-terminus: MAFMRLGSKSEAFHREGQTWLCTTGLVSDVTIEVGDMKFHLHKFPLLSRSGLLERLIEESSTDDGSGCVLSLDEIPGGGKTFELVTKFCYGVKIELTAFNVVSLRCAAEYLEMTDNYGEGNLVGMTETFLNEVFGNWTDSIKALQTCEEVIDYAEDLHIISRCVDSLAVKACADPSLFNWPVGGGKNATSGQNTEDESHLWNGISASGKMLQHTGEDWWFDDASFLSLPLFKRLITAIEARGMKLENIAMAVMYYTRKHVPLMNRQVNMDEQVIETPNPSEEDQKTCLEEIVGLLPSKKGVNPTKFLLRLLQTAMVLHASQSSRENLERRIGNQLDQAALVDLLIPNMGYSETLYDVECVLRMIEQFVSSTEQAGIVPSPCIIEEGHLVKDGADLLTPTTLVATLVDGYLAEVAPDVNLKLAKFEAIAAAIPDYARPLDDGVYHAIDVYLKAHPWITDSEREHICRLMNCQKLSLEASTHAAQNERLPLRVIVQVLFFEQLRLRTSVSGWFFVSENLDNPDNQHGANGGLLKPRGENVRERVSELEKECMNMKQELHKLVRTKRSWKNFTRKLNFKKKSECCKPKDQATPAI.

Positions 28–98 (SDVTIEVGDM…CYGVKIELTA (71 aa)) constitute a BTB domain. In terms of domain architecture, NPH3 spans 217–502 (DWWFDDASFL…VQVLFFEQLR (286 aa)). Phosphotyrosine is present on Y443.

It belongs to the NPH3 family.

Its pathway is protein modification; protein ubiquitination. Its function is as follows. May act as a substrate-specific adapter of an E3 ubiquitin-protein ligase complex (CUL3-RBX1-BTB) which mediates the ubiquitination and subsequent proteasomal degradation of target proteins. This is BTB/POZ domain-containing protein At5g03250 from Arabidopsis thaliana (Mouse-ear cress).